A 121-amino-acid chain; its full sequence is Small ribosomal subunit protein uS13 (121 aa).

The segment at 95 to 121 (LPMRGQRTRTNARTRKGPRKAAASLKK) is disordered.

The protein belongs to the universal ribosomal protein uS13 family. In terms of assembly, part of the 30S ribosomal subunit. Forms a loose heterodimer with protein S19. Forms two bridges to the 50S subunit in the 70S ribosome.

Its function is as follows. Located at the top of the head of the 30S subunit, it contacts several helices of the 16S rRNA. In the 70S ribosome it contacts the 23S rRNA (bridge B1a) and protein L5 of the 50S subunit (bridge B1b), connecting the 2 subunits; these bridges are implicated in subunit movement. Contacts the tRNAs in the A and P-sites. The protein is Small ribosomal subunit protein uS13 of Polaromonas naphthalenivorans (strain CJ2).